Reading from the N-terminus, the 374-residue chain is Alpha-N-acetylgalactosaminide alpha-2,6-sialyltransferase 2 (374 aa).

The Cytoplasmic portion of the chain corresponds to 1–7 (MGLPRGS). The helical; Signal-anchor for type II membrane protein transmembrane segment at 8–28 (FFWLLLLLTAACSGLLFALYF) threads the bilayer. Residues 29 to 374 (SAVQRYPGPA…KAGILQLYQR (346 aa)) are Lumenal-facing. 2 disulfides stabilise this stretch: C66/C148 and C151/C317. N-linked (GlcNAc...) asparagine glycans are attached at residues N85 and N130. Residue N156 coordinates CMP-N-acetyl-beta-neuraminate. N-linked (GlcNAc...) asparagine glycosylation occurs at N161. N179, S304, and H336 together coordinate CMP-N-acetyl-beta-neuraminate.

Belongs to the glycosyltransferase 29 family. In terms of tissue distribution, expressed in skeletal muscle, heart, kidney, placenta, lung and leukocytes.

Its subcellular location is the golgi apparatus membrane. The catalysed reaction is a beta-D-galactosyl-(1-&gt;3)-N-acetyl-alpha-D-galactosaminyl derivative + CMP-N-acetyl-beta-neuraminate = a beta-D-galactosyl-(1-&gt;3)-[N-acetyl-alpha-neuraminyl-(2-&gt;6)]-N-acetyl-alpha-D-galactosaminyl derivative + CMP + H(+). It catalyses the reaction a 3-O-[N-acetyl-alpha-D-galactosaminyl]-L-threonyl-[protein] + CMP-N-acetyl-beta-neuraminate = a 3-O-[N-acetyl-alpha-neuraminosyl-(2-&gt;6)-N-acetyl-alpha-D-galactosaminyl]-L-threonyl-[protein] + CMP + H(+). The enzyme catalyses a 3-O-[N-acetyl-alpha-neuraminyl-(2-&gt;3)-beta-D-galactosyl-(1-&gt;3)-N-acetyl-alpha-D-galactosaminyl]-L-threonyl-[protein] + CMP-N-acetyl-beta-neuraminate = a 3-O-{alpha-Neu5Ac-(2-&gt;3)-beta-D-Gal-(1-&gt;3)-[alpha-Neu5Ac-(2-&gt;6)]-alpha-D-GalNAc}-L-threonyl-[protein] + CMP + H(+). It functions in the pathway protein modification; protein glycosylation. Catalyzes the transfer of N-acetylneuraminyl groups onto glycan chains in glycoproteins. Conjugates sialic acid with an alpha-2-6 linkage to N-acetylgalactosamine (GalNAc) glycan chains linked to serine or threonine in glycoproteins. Sialylates alphaGalNAc- and Galbeta1-&gt;3GalNAc-O-Ser/Thr epitopes also known as Tn and T antigens. This Homo sapiens (Human) protein is Alpha-N-acetylgalactosaminide alpha-2,6-sialyltransferase 2 (ST6GALNAC2).